Reading from the N-terminus, the 729-residue chain is Cellulose synthase catalytic subunit [UDP-forming] (729 aa).

Transmembrane regions (helical) follow at residues 30 to 50 (LATWALWLLGALLLVFVVAVP), 110 to 130 (FILGLGLLGAELYAFVILVLG), and 171 to 191 (TTVLAASVIDWPAGKITIHLL). The catalytic subdomain A stretch occupies residues 151–244 (LWPSVDVFIP…YVAIFDCDHI (94 aa)). The active site involves Asp193. Residues Asp240 and Asp242 each coordinate substrate. The segment at 321–381 (TALEEVGGVA…AQRIRWARGM (61 aa)) is catalytic subdomain B. Asp337 is a catalytic residue. 5 helical membrane-spanning segments follow: residues 405–425 (LNAMLHFFYGVPRIIYLTAPL), 427–447 (YLFFGAHVIQASALMILAYAL), 520–540 (LFLLLLNVVGMVAGVLRLIYV), 549–569 (IWFNLAWTLYNMVLLGATIAT), and 610–630 (MAIMLAQPQPIEPGLPVQIGL). In terms of domain architecture, PilZ spans 575-671 (QVRSAHRVPL…QERWLVASTF (97 aa)).

This sequence belongs to the glycosyltransferase 2 family. The cofactor is Mg(2+).

Its subcellular location is the cell inner membrane. It carries out the reaction [(1-&gt;4)-beta-D-glucosyl](n) + UDP-alpha-D-glucose = [(1-&gt;4)-beta-D-glucosyl](n+1) + UDP + H(+). It participates in glycan metabolism; bacterial cellulose biosynthesis. Its activity is regulated as follows. Activated by bis-(3'-5') cyclic diguanylic acid (c-di-GMP). Its function is as follows. Catalytic subunit of cellulose synthase. It polymerizes uridine 5'-diphosphate glucose to cellulose, which is produced as an extracellular component for mechanical and chemical protection. This is Cellulose synthase catalytic subunit [UDP-forming] (bcsA) from Xanthomonas axonopodis pv. citri (strain 306).